The primary structure comprises 415 residues: Serine hydroxymethyltransferase (415 aa).

Residues Leu-117 and 121-123 contribute to the (6S)-5,6,7,8-tetrahydrofolate site; that span reads GHL. Lys-226 bears the N6-(pyridoxal phosphate)lysine mark. A (6S)-5,6,7,8-tetrahydrofolate-binding site is contributed by Glu-241.

This sequence belongs to the SHMT family. In terms of assembly, homodimer. Pyridoxal 5'-phosphate serves as cofactor.

It localises to the cytoplasm. The enzyme catalyses (6R)-5,10-methylene-5,6,7,8-tetrahydrofolate + glycine + H2O = (6S)-5,6,7,8-tetrahydrofolate + L-serine. Its pathway is one-carbon metabolism; tetrahydrofolate interconversion. It participates in amino-acid biosynthesis; glycine biosynthesis; glycine from L-serine: step 1/1. Catalyzes the reversible interconversion of serine and glycine with tetrahydrofolate (THF) serving as the one-carbon carrier. This reaction serves as the major source of one-carbon groups required for the biosynthesis of purines, thymidylate, methionine, and other important biomolecules. Also exhibits THF-independent aldolase activity toward beta-hydroxyamino acids, producing glycine and aldehydes, via a retro-aldol mechanism. The sequence is that of Serine hydroxymethyltransferase from Bacillus licheniformis (strain ATCC 14580 / DSM 13 / JCM 2505 / CCUG 7422 / NBRC 12200 / NCIMB 9375 / NCTC 10341 / NRRL NRS-1264 / Gibson 46).